A 406-amino-acid polypeptide reads, in one-letter code: DNA primase DnaG (406 aa).

The Toprim domain maps to P169 to I247. The Mg(2+) site is built by E175, D220, and D222.

This sequence belongs to the archaeal DnaG primase family. In terms of assembly, forms a ternary complex with MCM helicase and DNA. Component of the archaeal exosome complex. Interacts with Csl4 but not with Rrp4. Requires Mg(2+) as cofactor.

It catalyses the reaction ssDNA + n NTP = ssDNA/pppN(pN)n-1 hybrid + (n-1) diphosphate.. Functionally, RNA polymerase that catalyzes the synthesis of short RNA molecules used as primers for DNA polymerase during DNA replication. Can use NTPs but not dNTPs. Binds DNA. Also part of the exosome, which is a complex involved in RNA degradation. Acts as a poly(A)-binding protein that enhances the interaction between heteromeric, adenine-rich transcripts and the exosome. This chain is DNA primase DnaG, found in Saccharolobus solfataricus (strain ATCC 35092 / DSM 1617 / JCM 11322 / P2) (Sulfolobus solfataricus).